Consider the following 991-residue polypeptide: Transcription factor ROB1 (991 aa).

Positions 17–43 (CTVCRTIKRKCDGNTPCSNCLKRNQEC) form a DNA-binding region, zn(2)-C6 fungal-type. Disordered stretches follow at residues 150–188 (LNQQ…ISLA), 792–875 (FYAQ…EDNP), and 901–959 (QEEG…PQLP). Positions 152–168 (QQQQQQQPSPQSLSQSS) are enriched in low complexity. Residues 169–187 (ASEVSTRSSPASPNSTISL) show a composition bias toward polar residues. Residues 795–806 (QQQQQQQQQQQQ) are compositionally biased toward low complexity. 2 stretches are compositionally biased toward basic and acidic residues: residues 807 to 817 (PKHEYHDHQQE) and 825 to 855 (QEEH…YPMK). The segment covering 907-931 (QQQQQQQQEQVQQEQVQQEQVQQDQ) has biased composition (low complexity).

The protein localises to the nucleus. In terms of biological role, transcription factor that mediates conventional biofilm formation and plays a key role in microcolony formation under both flow and static conditions and to epithelial surfaces. Modulates infection of mammalian hosts. This is Transcription factor ROB1 from Candida albicans (strain SC5314 / ATCC MYA-2876) (Yeast).